Reading from the N-terminus, the 83-residue chain is Exodeoxyribonuclease 7 small subunit (83 aa).

Belongs to the XseB family. Heterooligomer composed of large and small subunits.

The protein localises to the cytoplasm. It catalyses the reaction Exonucleolytic cleavage in either 5'- to 3'- or 3'- to 5'-direction to yield nucleoside 5'-phosphates.. Bidirectionally degrades single-stranded DNA into large acid-insoluble oligonucleotides, which are then degraded further into small acid-soluble oligonucleotides. This is Exodeoxyribonuclease 7 small subunit from Moorella thermoacetica (strain ATCC 39073 / JCM 9320).